A 255-amino-acid chain; its full sequence is Large ribosomal subunit protein uL4 (255 aa).

This sequence belongs to the universal ribosomal protein uL4 family. As to quaternary structure, part of the 50S ribosomal subunit.

Its function is as follows. One of the primary rRNA binding proteins, this protein initially binds near the 5'-end of the 23S rRNA. It is important during the early stages of 50S assembly. It makes multiple contacts with different domains of the 23S rRNA in the assembled 50S subunit and ribosome. Functionally, forms part of the polypeptide exit tunnel. The chain is Large ribosomal subunit protein uL4 from Thermoplasma volcanium (strain ATCC 51530 / DSM 4299 / JCM 9571 / NBRC 15438 / GSS1).